Reading from the N-terminus, the 328-residue chain is Embigin (328 aa).

The first 33 residues, 1–33 (MRSHTGLRALVAPGCSLLLLYLLAATRPDRAVG), serve as a signal peptide directing secretion. The Extracellular portion of the chain corresponds to 34–264 (DPADSAFTSL…VLSFMVPLKP (231 aa)). Residues N55, N62, N75, N100, N117, N189, N196, N214, and N219 are each glycosylated (N-linked (GlcNAc...) asparagine). 2 Ig-like domains span residues 67 to 160 (EQTR…RVPK) and 159 to 254 (PKVH…IKLV). Disulfide bonds link C88/C144 and C180/C238. Residues 265 to 285 (FLAIIAEVILLVAIILLCEVY) form a helical membrane-spanning segment. At 286-328 (TQKKKNDPDDGKEFEQIEQLKSDDSNGIENNVPRYRKTDSGDQ) the chain is on the cytoplasmic side. A compositionally biased stretch (basic and acidic residues) spans 289-309 (KKNDPDDGKEFEQIEQLKSDD). Residues 289–328 (KKNDPDDGKEFEQIEQLKSDDSNGIENNVPRYRKTDSGDQ) form a disordered region. S310 carries the post-translational modification Phosphoserine.

As to quaternary structure, interacts with SLC16A1, SLC16A6 and SLC16A7. Post-translationally, N-glycosylated. In terms of tissue distribution, detected in prostate, mammary gland and erythrocytes (at protein level). Detected in testis, brain, prostate, heart, kidney, liver, mammary gland and lung.

The protein resides in the cell membrane. It localises to the synapse. In terms of biological role, plays a role in the outgrowth of motoneurons and in the formation of neuromuscular junctions. Following muscle denervation, promotes nerve terminal sprouting and the formation of additional acetylcholine receptor clusters at synaptic sites without affecting terminal Schwann cell number or morphology. Delays the retraction of terminal sprouts following re-innervation of denervated endplates. Plays a role in targeting the monocarboxylate transporters SLC16A1, SLC16A6 and SLC16A7 to the cell membrane. In Rattus norvegicus (Rat), this protein is Embigin (Emb).